The primary structure comprises 293 residues: Protein YIF1A (293 aa).

Residues 1–27 are disordered; it reads MAYHSAYGVHGSKHRTRAAPDPPPLFD. N-acetylalanine is present on Ala-2. Residues 2-138 lie on the Cytoplasmic side of the membrane; sequence AYHSAYGVHG…PPRKDLNAPD (137 aa). Residue Ser-12 is modified to Phosphoserine. Residues 139–159 form a helical membrane-spanning segment; it reads LYIPTMAFITYVLLAGMALGI. The Lumenal portion of the chain corresponds to 160 to 174; the sequence is QQRFSPEVLGLCAST. A helical membrane pass occupies residues 175–195; sequence ALVWVFMEVLALLLGLYLATV. Residues 196 to 203 are Cytoplasmic-facing; it reads RSELSTFH. The helical transmembrane segment at 204–226 threads the bilayer; that stretch reads LLAYSGYKYVGMILSVLTGLLFG. At 227–229 the chain is on the lumenal side; sequence SDG. Residues 230–249 traverse the membrane as a helical segment; the sequence is YYVALAWTSSALMYFIVRSL. Residues 250-271 lie on the Cytoplasmic side of the membrane; that stretch reads RTAASGPDSMGGPAPRQRLQLY. The chain crosses the membrane as a helical span at residues 272-292; sequence LTLGAAAFQPLIIYWLTFHLV.

The protein belongs to the YIF1 family. In terms of assembly, interacts with YIPF5.

It localises to the endoplasmic reticulum membrane. The protein resides in the golgi apparatus membrane. It is found in the endoplasmic reticulum-Golgi intermediate compartment membrane. Its function is as follows. Possible role in transport between endoplasmic reticulum and Golgi. The chain is Protein YIF1A (Yif1a) from Mus musculus (Mouse).